Here is a 61-residue protein sequence, read N- to C-terminus: Large ribosomal subunit protein bL32 (61 aa).

Belongs to the bacterial ribosomal protein bL32 family.

This is Large ribosomal subunit protein bL32 from Syntrophus aciditrophicus (strain SB).